The primary structure comprises 130 residues: Transcription antitermination protein NusB (130 aa).

The protein belongs to the NusB family.

Its function is as follows. Involved in transcription antitermination. Required for transcription of ribosomal RNA (rRNA) genes. Binds specifically to the boxA antiterminator sequence of the ribosomal RNA (rrn) operons. The polypeptide is Transcription antitermination protein NusB (Bacillus anthracis (strain A0248)).